Here is a 462-residue protein sequence, read N- to C-terminus: Argininosuccinate lyase (462 aa).

It belongs to the lyase 1 family. Argininosuccinate lyase subfamily.

The protein resides in the cytoplasm. It carries out the reaction 2-(N(omega)-L-arginino)succinate = fumarate + L-arginine. The protein operates within amino-acid biosynthesis; L-arginine biosynthesis; L-arginine from L-ornithine and carbamoyl phosphate: step 3/3. The chain is Argininosuccinate lyase from Rippkaea orientalis (strain PCC 8801 / RF-1) (Cyanothece sp. (strain PCC 8801)).